Consider the following 963-residue polypeptide: Adhesion G protein-coupled receptor D2 (963 aa).

At 1-662 the chain is on the extracellular side; sequence MDAPWGAGER…EEESLLRTLS (662 aa). Residues 18–38 are disordered; it reads DRSGVSLGPPPTPQVNQGTLG. In terms of domain architecture, Pentraxin (PTX) spans 116-325; that stretch reads TTAVLVFDER…LPTVWVRLLC (210 aa). An intrachain disulfide couples cysteine 146 to cysteine 212. An N-linked (GlcNAc...) asparagine glycan is attached at asparagine 271. In terms of domain architecture, GAIN-B spans 489–649; it reads MALVASVQRL…AILLQIYEVQ (161 aa). The segment at 599 to 649 is GPS; that stretch reads PLFPPHPPSPYTGGAWATTGCSVAALYLDSTACFCNHSTSFAILLQIYEVQ. A disulfide bridge links cysteine 619 with cysteine 633. An N-linked (GlcNAc...) asparagine glycan is attached at asparagine 634. A helical transmembrane segment spans residues 663–683; it reads FVGCGVSFCALTTTFLLFLVA. Topologically, residues 684 to 691 are cytoplasmic; the sequence is GVPKSERT. Residues 692–712 traverse the membrane as a helical segment; it reads TVHKNLTFSLASAEGFLMTSE. The Extracellular portion of the chain corresponds to 713 to 720; that stretch reads WAKANEVA. Residues 721–741 form a helical membrane-spanning segment; it reads CVAVTVAMHFLFLVAFSWMLV. Residues 742 to 762 lie on the Cytoplasmic side of the membrane; sequence EGLLLWRKVVAVSMHPGPGMR. A helical transmembrane segment spans residues 763–783; the sequence is LYHATGWGVPVGIVAVTLAML. Topologically, residues 784-800 are extracellular; it reads PHDYVAPGHCWLNVHTN. The chain crosses the membrane as a helical span at residues 801-821; sequence AIWAFVGPVLFVLTANTCILA. The Cytoplasmic portion of the chain corresponds to 822 to 857; that stretch reads RVVMITVSSARRRARMLSPQPCLQQQIWTQIWATVK. Residues 858–878 form a helical membrane-spanning segment; the sequence is PVLVLLPVLGLTWLAGILVHL. At 879–880 the chain is on the extracellular side; the sequence is SP. The helical transmembrane segment at 881 to 901 threads the bilayer; the sequence is AWAYAAVGLNSIQGLYIFLVY. Residues 902–963 are Cytoplasmic-facing; the sequence is AACNEEVRSA…TPRHPLKAPA (62 aa).

The protein belongs to the G-protein coupled receptor 2 family. Adhesion G-protein coupled receptor (ADGR) subfamily.

It localises to the membrane. In terms of biological role, orphan receptor. This is Adhesion G protein-coupled receptor D2 (ADGRD2) from Homo sapiens (Human).